Reading from the N-terminus, the 134-residue chain is Small ribosomal subunit protein uS9 (134 aa).

The interval 114–134 (QKESKNFGGPGARAKYQKSYR) is disordered.

It belongs to the universal ribosomal protein uS9 family.

This chain is Small ribosomal subunit protein uS9, found in Methanosarcina acetivorans (strain ATCC 35395 / DSM 2834 / JCM 12185 / C2A).